Consider the following 298-residue polypeptide: ATP phosphoribosyltransferase (298 aa).

It belongs to the ATP phosphoribosyltransferase family. Long subfamily. Mg(2+) serves as cofactor.

It localises to the cytoplasm. It catalyses the reaction 1-(5-phospho-beta-D-ribosyl)-ATP + diphosphate = 5-phospho-alpha-D-ribose 1-diphosphate + ATP. The protein operates within amino-acid biosynthesis; L-histidine biosynthesis; L-histidine from 5-phospho-alpha-D-ribose 1-diphosphate: step 1/9. With respect to regulation, feedback inhibited by histidine. Catalyzes the condensation of ATP and 5-phosphoribose 1-diphosphate to form N'-(5'-phosphoribosyl)-ATP (PR-ATP). Has a crucial role in the pathway because the rate of histidine biosynthesis seems to be controlled primarily by regulation of HisG enzymatic activity. The sequence is that of ATP phosphoribosyltransferase from Aeromonas salmonicida (strain A449).